Consider the following 476-residue polypeptide: Glycogen synthase (476 aa).

ADP-alpha-D-glucose is bound at residue Lys15.

It belongs to the glycosyltransferase 1 family. Bacterial/plant glycogen synthase subfamily.

The catalysed reaction is [(1-&gt;4)-alpha-D-glucosyl](n) + ADP-alpha-D-glucose = [(1-&gt;4)-alpha-D-glucosyl](n+1) + ADP + H(+). It participates in glycan biosynthesis; glycogen biosynthesis. Synthesizes alpha-1,4-glucan chains using ADP-glucose. The chain is Glycogen synthase from Yersinia pestis bv. Antiqua (strain Antiqua).